Reading from the N-terminus, the 195-residue chain is Imidazoleglycerol-phosphate dehydratase (195 aa).

The protein belongs to the imidazoleglycerol-phosphate dehydratase family.

The protein resides in the cytoplasm. The enzyme catalyses D-erythro-1-(imidazol-4-yl)glycerol 3-phosphate = 3-(imidazol-4-yl)-2-oxopropyl phosphate + H2O. It participates in amino-acid biosynthesis; L-histidine biosynthesis; L-histidine from 5-phospho-alpha-D-ribose 1-diphosphate: step 6/9. The protein is Imidazoleglycerol-phosphate dehydratase of Burkholderia thailandensis (strain ATCC 700388 / DSM 13276 / CCUG 48851 / CIP 106301 / E264).